The sequence spans 425 residues: Stabilizer of axonemal microtubules 4 (425 aa).

Disordered regions lie at residues 259 to 297 (RGSDRDTGYSRVSERSLNPRMPTPSSQPTSMSHRSYQPP) and 315 to 335 (NKEPTGFTLNNPSYVRSSYEQ). The segment covering 260 to 272 (GSDRDTGYSRVSE) has biased composition (basic and acidic residues). Residues 277–290 (PRMPTPSSQPTSMS) show a composition bias toward low complexity. Residues 321–332 (FTLNNPSYVRSS) are compositionally biased toward polar residues.

Microtubule inner protein component of sperm flagellar doublet microtubules. Interacts with PPP1CA. Expressed in brain, ovaries and testis. Expressed in the tracheal epithelium and in secondary spermatocytes and spermatids present in the seminiferous tubule. Expressed in ependymal cells lining the ventricular walls of the brain.

The protein resides in the cell projection. It localises to the cilium. The protein localises to the cytoplasm. Its subcellular location is the cytoskeleton. It is found in the flagellum axoneme. The protein is Stabilizer of axonemal microtubules 4 of Rattus norvegicus (Rat).